Here is a 144-residue protein sequence, read N- to C-terminus: Large ribosomal subunit protein uL15 (144 aa).

Residues Met1 to Leu57 form a disordered region. A compositionally biased stretch (gly residues) spans Arg21–Gly31. The segment covering Gly32–Gly44 has biased composition (basic residues).

The protein belongs to the universal ribosomal protein uL15 family. In terms of assembly, part of the 50S ribosomal subunit.

Its function is as follows. Binds to the 23S rRNA. The protein is Large ribosomal subunit protein uL15 of Vibrio vulnificus (strain CMCP6).